A 153-amino-acid polypeptide reads, in one-letter code: Endoribonuclease YbeY (153 aa).

3 residues coordinate Zn(2+): H114, H118, and H124.

The protein belongs to the endoribonuclease YbeY family. Zn(2+) is required as a cofactor.

Its subcellular location is the cytoplasm. Functionally, single strand-specific metallo-endoribonuclease involved in late-stage 70S ribosome quality control and in maturation of the 3' terminus of the 16S rRNA. The sequence is that of Endoribonuclease YbeY from Shewanella sp. (strain MR-7).